A 485-amino-acid polypeptide reads, in one-letter code: Glutamyl-tRNA(Gln) amidotransferase subunit A (485 aa).

Residues lysine 79 and serine 154 each act as charge relay system in the active site. The Acyl-ester intermediate role is filled by serine 178.

Belongs to the amidase family. GatA subfamily. Heterotrimer of A, B and C subunits.

The catalysed reaction is L-glutamyl-tRNA(Gln) + L-glutamine + ATP + H2O = L-glutaminyl-tRNA(Gln) + L-glutamate + ADP + phosphate + H(+). Its function is as follows. Allows the formation of correctly charged Gln-tRNA(Gln) through the transamidation of misacylated Glu-tRNA(Gln) in organisms which lack glutaminyl-tRNA synthetase. The reaction takes place in the presence of glutamine and ATP through an activated gamma-phospho-Glu-tRNA(Gln). This chain is Glutamyl-tRNA(Gln) amidotransferase subunit A, found in Staphylococcus saprophyticus subsp. saprophyticus (strain ATCC 15305 / DSM 20229 / NCIMB 8711 / NCTC 7292 / S-41).